The sequence spans 274 residues: MREYLNFLKYIKENGVLKNDRTGTGTRSIFGYQMRFDLQKGFPLVTTKKIHIPSVVHELLWFLSGSTNIKYLNDNNVRIWNEWATVDGELGPIYGKQWRDFNGQGIDQIADVIQMLKTNPNSRRILVLAWNPCVVPSEKISPQENVVKGNSALPPCHAMFQFYVANNKLSCMLTQRSADAFLGVPFNIASYSLLTHMVAQQCNLDVGELIWSGGDCHIYNNHIEQVNEQLSREPLALPTLKILRKSNSIFDYKYEDFEFENYNHHPAIKAKISV.

Arg-21 is a binding site for dUMP. His-51 is a binding site for (6R)-5,10-methylene-5,6,7,8-tetrahydrofolate. Residue 123–124 (RR) participates in dUMP binding. The active-site Nucleophile is Cys-156. DUMP is bound by residues 176 to 179 (RSAD), Asn-187, and 217 to 219 (HIY). Residue Asp-179 coordinates (6R)-5,10-methylene-5,6,7,8-tetrahydrofolate. Residue Ser-273 participates in (6R)-5,10-methylene-5,6,7,8-tetrahydrofolate binding.

It belongs to the thymidylate synthase family. Bacterial-type ThyA subfamily. Homodimer.

The protein resides in the cytoplasm. It catalyses the reaction dUMP + (6R)-5,10-methylene-5,6,7,8-tetrahydrofolate = 7,8-dihydrofolate + dTMP. It participates in pyrimidine metabolism; dTTP biosynthesis. Its function is as follows. Catalyzes the reductive methylation of 2'-deoxyuridine-5'-monophosphate (dUMP) to 2'-deoxythymidine-5'-monophosphate (dTMP) while utilizing 5,10-methylenetetrahydrofolate (mTHF) as the methyl donor and reductant in the reaction, yielding dihydrofolate (DHF) as a by-product. This enzymatic reaction provides an intracellular de novo source of dTMP, an essential precursor for DNA biosynthesis. The protein is Thymidylate synthase of Francisella tularensis subsp. holarctica (strain FTNF002-00 / FTA).